We begin with the raw amino-acid sequence, 533 residues long: Light-independent protochlorophyllide reductase subunit B (533 aa).

Asp-36 serves as a coordination point for [4Fe-4S] cluster. Catalysis depends on Asp-292, which acts as the Proton donor. Residue 428-429 coordinates substrate; the sequence is GL.

This sequence belongs to the ChlB/BchB/BchZ family. Protochlorophyllide reductase is composed of three subunits; BchL, BchN and BchB. Forms a heterotetramer of two BchB and two BchN subunits. [4Fe-4S] cluster is required as a cofactor.

It carries out the reaction chlorophyllide a + oxidized 2[4Fe-4S]-[ferredoxin] + 2 ADP + 2 phosphate = protochlorophyllide a + reduced 2[4Fe-4S]-[ferredoxin] + 2 ATP + 2 H2O. Its pathway is porphyrin-containing compound metabolism; bacteriochlorophyll biosynthesis (light-independent). Functionally, component of the dark-operative protochlorophyllide reductase (DPOR) that uses Mg-ATP and reduced ferredoxin to reduce ring D of protochlorophyllide (Pchlide) to form chlorophyllide a (Chlide). This reaction is light-independent. The NB-protein (BchN-BchB) is the catalytic component of the complex. The polypeptide is Light-independent protochlorophyllide reductase subunit B (Prosthecochloris aestuarii (strain DSM 271 / SK 413)).